The primary structure comprises 442 residues: Circumsporozoite protein (442 aa).

An N-terminal signal peptide occupies residues 1–18; it reads MMRKLAILSVSSFLFVEA. The tract at residues 69–357 is disordered; that stretch reads SRSLGENDDG…VKNNNNEEPS (289 aa). Residues 81 to 94 show a composition bias toward low complexity; that stretch reads DNGNNNNGNNNNGD. A compositionally biased stretch (basic and acidic residues) spans 95-115; it reads NGREGKDEDKRDGNNEDNEKL. Residues 114-121 form a required for the binding to heparan sulfate proteoglycans (HSPGs) on the surface of host hepatocytes region; the sequence is KLRKPKHK. The region I; contains the proteolytic cleavage site stretch occupies residues 122-126; it reads KLKQP. Over residues 130-318 the composition is skewed to low complexity; it reads NPDPNANPNV…PNANPNANPN (189 aa). 46 repeat units span residues 134–137, 138–141, 142–145, 146–149, 150–153, 154–157, 158–161, 162–165, 166–169, 170–173, 174–177, 178–181, 182–185, 186–189, 190–193, 194–197, 198–201, 202–205, 206–209, 210–213, 214–217, 218–221, 222–225, 226–229, 230–233, 234–237, 238–241, 242–245, 246–249, 250–253, 254–257, 258–261, 262–265, 266–269, 270–273, 274–277, 278–281, 282–285, 286–289, 290–293, 294–297, 298–301, 302–305, 306–309, 310–313, and 314–317. Residues 134 to 317 are 46 X 4 AA tandem repeats of N-[AV]-[ND]-P; the sequence is NANPNVDPNA…NPNANPNANP (184 aa). Residues 319 to 334 show a composition bias toward polar residues; sequence KNNQGNGQGHNMPNDP. The segment covering 340–354 has biased composition (low complexity); sequence ENANANNAVKNNNNE. The TSP type-1 domain maps to 367–420; the sequence is KIQNSLSTEWSPCSVTCGNGIQVRIKPGSADKPKDQLDYENDIEKKICKMEKCS. 2 cysteine pairs are disulfide-bonded: Cys-379–Cys-414 and Cys-383–Cys-419. A glycan (O-linked (Fuc) threonine) is linked at Thr-382. Cys-419 carries GPI-anchor amidated cysteine lipidation. The propeptide at 420-442 is removed in mature form; that stretch reads SSVFNVVNSSIGLIMVLSFLFLN.

The protein belongs to the plasmodium circumsporozoite protein family. Post-translationally, during host cell invasion, proteolytically cleaved at the cell membrane in the region I by a papain-like cysteine protease of parasite origin. Cleavage is triggered by the sporozoite contact with highly sulfated heparan sulfate proteoglycans (HSPGs) present on the host hepatocyte cell surface. Cleavage exposes the TSP type-1 (TSR) domain and is required for productive invasion of host hepatocytes but not for adhesion to the host cell membrane. Cleavage is dispensable for sporozoite development in the oocyst, motility and for traversal of host and vector cells. O-glycosylated; maybe by POFUT2.

Its subcellular location is the cell membrane. It localises to the cytoplasm. Essential sporozoite protein. In the mosquito vector, required for sporozoite development in the oocyst, migration through the vector hemolymph and entry into the vector salivary glands. In the vertebrate host, required for sporozoite migration through the host dermis and infection of host hepatocytes. Binds to highly sulfated heparan sulfate proteoglycans (HSPGs) on the surface of host hepatocytes. In terms of biological role, in the vertebrate host, binds to highly sulfated heparan sulfate proteoglycans (HSPGs) on the surface of host hepatocytes and is required for sporozoite invasion of the host hepatocytes. The chain is Circumsporozoite protein from Plasmodium falciparum (isolate Wellcome).